The sequence spans 499 residues: Glycerol kinase (499 aa).

An ADP-binding site is contributed by Thr13. 3 residues coordinate ATP: Thr13, Thr14, and Ser15. Position 13 (Thr13) interacts with sn-glycerol 3-phosphate. Arg17 lines the ADP pocket. Sn-glycerol 3-phosphate is bound by residues Arg83, Glu84, Tyr135, and Asp245. The glycerol site is built by Arg83, Glu84, Tyr135, Asp245, and Gln246. Residues Thr267 and Gly310 each contribute to the ADP site. Residues Thr267, Gly310, Gln314, and Gly411 each coordinate ATP. ADP-binding residues include Gly411 and Asn415.

The protein belongs to the FGGY kinase family. Homotetramer and homodimer (in equilibrium).

It catalyses the reaction glycerol + ATP = sn-glycerol 3-phosphate + ADP + H(+). Its pathway is polyol metabolism; glycerol degradation via glycerol kinase pathway; sn-glycerol 3-phosphate from glycerol: step 1/1. With respect to regulation, activated by phosphorylation and inhibited by fructose 1,6-bisphosphate (FBP). Functionally, key enzyme in the regulation of glycerol uptake and metabolism. Catalyzes the phosphorylation of glycerol to yield sn-glycerol 3-phosphate. This Halothermothrix orenii (strain H 168 / OCM 544 / DSM 9562) protein is Glycerol kinase.